The primary structure comprises 291 residues: tRNA U34 carboxymethyltransferase (291 aa).

Carboxy-S-adenosyl-L-methionine-binding positions include Lys61, Trp75, Lys80, Gly100, 122–124 (DPS), 149–150 (VE), Tyr169, and Arg284.

It belongs to the class I-like SAM-binding methyltransferase superfamily. CmoB family. In terms of assembly, homotetramer.

It carries out the reaction carboxy-S-adenosyl-L-methionine + 5-hydroxyuridine(34) in tRNA = 5-carboxymethoxyuridine(34) in tRNA + S-adenosyl-L-homocysteine + H(+). In terms of biological role, catalyzes carboxymethyl transfer from carboxy-S-adenosyl-L-methionine (Cx-SAM) to 5-hydroxyuridine (ho5U) to form 5-carboxymethoxyuridine (cmo5U) at position 34 in tRNAs. The sequence is that of tRNA U34 carboxymethyltransferase from Campylobacter jejuni subsp. doylei (strain ATCC BAA-1458 / RM4099 / 269.97).